A 350-amino-acid polypeptide reads, in one-letter code: MNELDSLVDAARRMFADAATPTDLENAKAQFLGKAGRVTELLKGLAQLPVEEKKSRGAAVNVAKQAIEQALNERRQALADAELQAQLQAEALDVTLPGRQRGQGGLHPVSLTLERIEGIFGSMGFDVADGPEIESDWFNFTALNTPEDHPARSMHDTFYVEGGTASAPLLLRTHTSPMQIRHAVQHVKKHRALLDAGQPMPEIRVIAPGRTYRVDSDATHSPMFHQCEGLWIGENVSFKDLKVVFTAFCRTFFESDDLVLRFRPSFFPFTEPSAEIDIQFQDGPLAGRWLEVAGSGQVHPNVVRNMGLDPEKYIGFAFGMGPDRLTMLRYGVNDLRLFFDGDIRFLSQFQ.

Residue E271 participates in Mg(2+) binding.

This sequence belongs to the class-II aminoacyl-tRNA synthetase family. Phe-tRNA synthetase alpha subunit type 1 subfamily. As to quaternary structure, tetramer of two alpha and two beta subunits. The cofactor is Mg(2+).

It is found in the cytoplasm. It catalyses the reaction tRNA(Phe) + L-phenylalanine + ATP = L-phenylalanyl-tRNA(Phe) + AMP + diphosphate + H(+). In Paracidovorax citrulli (strain AAC00-1) (Acidovorax citrulli), this protein is Phenylalanine--tRNA ligase alpha subunit.